The primary structure comprises 968 residues: Probable transport protein MmpL2 (968 aa).

11 helical membrane-spanning segments follow: residues 22-42 (FAVV…LAVP), 204-224 (VIAA…LVLI), 245-265 (IFSL…AAST), 297-317 (AHVI…LSFA), 328-348 (PIAI…PAVL), 378-398 (WPGP…LALP), 763-783 (YDLL…MMII), 787-807 (VVAA…SFGL), 815-835 (ILGI…LLAV), 866-886 (TGGV…LFVF), and 890-910 (RIIG…TLVV).

This sequence belongs to the resistance-nodulation-cell division (RND) (TC 2.A.6) family. MmpL subfamily.

The protein localises to the cell membrane. In Mycobacterium tuberculosis (strain CDC 1551 / Oshkosh), this protein is Probable transport protein MmpL2 (mmpL2).